Reading from the N-terminus, the 230-residue chain is Uracil phosphoribosyltransferase (230 aa).

GTP is bound at residue 38-42 (KGLVK). 5-phospho-alpha-D-ribose 1-diphosphate is bound by residues R87, R112, and 140–148 (DPMIATGST). Residues I204 and 209-211 (GDA) contribute to the uracil site. D210 serves as a coordination point for 5-phospho-alpha-D-ribose 1-diphosphate.

It belongs to the UPRTase family. Mg(2+) serves as cofactor.

It carries out the reaction UMP + diphosphate = 5-phospho-alpha-D-ribose 1-diphosphate + uracil. It functions in the pathway pyrimidine metabolism; UMP biosynthesis via salvage pathway; UMP from uracil: step 1/1. With respect to regulation, allosterically activated by GTP. Its function is as follows. Catalyzes the conversion of uracil and 5-phospho-alpha-D-ribose 1-diphosphate (PRPP) to UMP and diphosphate. The polypeptide is Uracil phosphoribosyltransferase (Thermococcus kodakarensis (strain ATCC BAA-918 / JCM 12380 / KOD1) (Pyrococcus kodakaraensis (strain KOD1))).